Consider the following 244-residue polypeptide: 5-oxoprolinase subunit A (244 aa).

It belongs to the LamB/PxpA family. In terms of assembly, forms a complex composed of PxpA, PxpB and PxpC.

It catalyses the reaction 5-oxo-L-proline + ATP + 2 H2O = L-glutamate + ADP + phosphate + H(+). Catalyzes the cleavage of 5-oxoproline to form L-glutamate coupled to the hydrolysis of ATP to ADP and inorganic phosphate. The chain is 5-oxoprolinase subunit A from Salmonella heidelberg (strain SL476).